The following is a 525-amino-acid chain: Serine/threonine protein phosphatase 2A 55 kDa regulatory subunit B beta isoform (525 aa).

Residues 1–31 (MDPFSKSPDDDDLRPEAEAARRPQPQPQPRE) are disordered. 2 WD repeats span residues 48 to 87 (QEVD…DSAS) and 124 to 165 (EIEE…VKRI). The tract at residues 169–191 (NLNTSQSSGNGTTSSSSSSSSRA) is disordered. The span at 171–189 (NTSQSSGNGTTSSSSSSSS) shows a compositional bias: low complexity. WD repeat units lie at residues 244 to 282 (AHDY…QSFN), 293 to 333 (DLTE…LCDN), 352 to 390 (EIIA…GPVA), and 495 to 525 (DLST…MYYA).

Belongs to the phosphatase 2A regulatory subunit B family. As to quaternary structure, PP2A consists of a common heteromeric enzyme, composed of a catalytic subunit (subunits C), a constant regulatory subunit (subunit A), and a variety of regulatory subunits such as subunits B (the R2/B/PR55/B55, R3/B''/PR72/PR130/PR59 and R5/B'/B56 families).

Its function is as follows. The B regulatory subunit may modulate substrate selectivity and catalytic activity, and may also direct the localization of the catalytic enzyme to a particular subcellular compartment. The sequence is that of Serine/threonine protein phosphatase 2A 55 kDa regulatory subunit B beta isoform from Oryza sativa subsp. indica (Rice).